The chain runs to 389 residues: MPHALGLTLAVLLLGLATSLAGPFMSLFAVQQVGMTPLQLGLFLTFNALSAVLVSTRLGRWADRRSDRKPLVLLTLAAGVLAYLALSGVRSVYGVMATGVLLLAVSSAAFPQVFAFARSGFAQAPGDLPEKAVTVLRAVFSFAWVVGPGVGAAVLGRWSFSGVFLLAALCYALAGLPLLFIRPPAPAPAQPNSAPSPLTQELGAPPAPPMGWVVAAFTLYGMAMHMGMVMFSLFVTETLHGTSAQVGFLVGLCALLEIPVMLLFVLSKRLPGVEWLIKAGLLLFVVHFALIYLAQGMPLLIATQVLRAAVLAVMAGLGMTYFQQLMPGRFSAATTLYSNTSVVGSMLSGIVAGAWAQVFGYRPVFLLCAALSLAAWGMMLWATRRPKLA.

The next 12 membrane-spanning stretches (helical) occupy residues 10–30 (AVLL…LFAV), 34–54 (GMTP…AVLV), 69–89 (KPLV…LSGV), 96–116 (MATG…VFAF), 135–155 (VLRA…AAVL), 161–181 (SGVF…LLFI), 211–231 (GWVV…MVMF), 246–266 (VGFL…LFVL), 281–301 (LLLF…PLLI), 308–328 (AAVL…LMPG), 341–361 (SVVG…VFGY), and 363–383 (PVFL…LWAT).

It belongs to the major facilitator superfamily. Set transporter family.

The protein localises to the cell membrane. Functionally, involved in the efflux of sugars. The physiological role may be the detoxification of non-metabolizable sugar analogs. The chain is Putative sugar efflux transporter DR_1322 from Deinococcus radiodurans (strain ATCC 13939 / DSM 20539 / JCM 16871 / CCUG 27074 / LMG 4051 / NBRC 15346 / NCIMB 9279 / VKM B-1422 / R1).